Consider the following 198-residue polypeptide: Syndecan-4 (198 aa).

Residues 1-18 (MAPARLFALLLFFVGGVA) form the signal peptide. Residues 19-145 (ESIRETEVID…QGSNIFERTE (127 aa)) are Extracellular-facing. O-linked (Xyl...) (glycosaminoglycan) serine glycosylation is found at S39, S61, and S63. A glycan (O-linked (Xyl...) (chondroitin sulfate) serine) is linked at S95. The chain crosses the membrane as a helical span at residues 146–170 (VLAALIVGGIVGILFAVFLILLLMY). At 171-198 (RMKKKDEGSYDLGKKPIYKKAPTNEFYA) the chain is on the cytoplasmic side.

It belongs to the syndecan proteoglycan family. As to quaternary structure, homodimer. Interacts (via its cytoplasmic domain) with GIPC (via its PDZ domain). Interacts (via its cytoplasmic domain) with NUDT16L1. Interacts with CDCP1 and SDCBP. Interacts with DNM2; this interaction is markedly enhanced at focal ahesion site upon induction of focal adhesions and stress-fiber formation. Post-translationally, shedding is enhanced by a number of factors such as heparanase, thrombin or EGF. Also by stress and wound healing. PMA-mediated shedding is inhibited by TIMP3. In terms of processing, O-glycosylated; contains both chondroitin sulfate and heparan sulfate. Ser-39, Ser-61 and Ser-63 can all be modified by either chondroitin sulfate or heparan sulfate, and the protein exists in forms that contain only chondroitin sulfate, only heparan sulfate and both chondroitin sulfate and heparan sulfate. In terms of tissue distribution, detected in fibroblasts (at protein level). Also expressed in epithelial cells.

It localises to the membrane. The protein localises to the secreted. Functionally, cell surface proteoglycan which regulates exosome biogenesis in concert with SDCBP and PDCD6IP. The sequence is that of Syndecan-4 from Homo sapiens (Human).